Reading from the N-terminus, the 409-residue chain is Multifunctional CCA protein (409 aa).

Glycine 8 and arginine 11 together coordinate ATP. Positions 8 and 11 each coordinate CTP. Positions 21 and 23 each coordinate Mg(2+). ATP contacts are provided by arginine 91, arginine 137, and arginine 140. 3 residues coordinate CTP: arginine 91, arginine 137, and arginine 140. Positions 228-329 (TGIHTLMVVE…ITLMDQNDAW (102 aa)) constitute an HD domain.

This sequence belongs to the tRNA nucleotidyltransferase/poly(A) polymerase family. Bacterial CCA-adding enzyme type 1 subfamily. Monomer. Can also form homodimers and oligomers. Requires Mg(2+) as cofactor. It depends on Ni(2+) as a cofactor.

The enzyme catalyses a tRNA precursor + 2 CTP + ATP = a tRNA with a 3' CCA end + 3 diphosphate. The catalysed reaction is a tRNA with a 3' CCA end + 2 CTP + ATP = a tRNA with a 3' CCACCA end + 3 diphosphate. Functionally, catalyzes the addition and repair of the essential 3'-terminal CCA sequence in tRNAs without using a nucleic acid template. Adds these three nucleotides in the order of C, C, and A to the tRNA nucleotide-73, using CTP and ATP as substrates and producing inorganic pyrophosphate. tRNA 3'-terminal CCA addition is required both for tRNA processing and repair. Also involved in tRNA surveillance by mediating tandem CCA addition to generate a CCACCA at the 3' terminus of unstable tRNAs. While stable tRNAs receive only 3'-terminal CCA, unstable tRNAs are marked with CCACCA and rapidly degraded. This is Multifunctional CCA protein from Psychromonas ingrahamii (strain DSM 17664 / CCUG 51855 / 37).